Consider the following 239-residue polypeptide: RING finger protein 151 (239 aa).

The RING-type zinc-finger motif lies at Cys-20–Arg-58. A TRAF-type zinc finger spans residues Glu-101 to Glu-156.

In terms of assembly, interacts with DTNBP1. In terms of tissue distribution, expressed in testis. Expressed in round spermatids of the stages VII-VIII semniniferous tubules. Expressed in elongating spermatids of stages VIII-IX seminiferous tubules (at protein level).

It localises to the cytoplasm. It is found in the nucleus. Functionally, may be involved in acrosome formation of spermatids. This Mus musculus (Mouse) protein is RING finger protein 151 (Rnf151).